We begin with the raw amino-acid sequence, 627 residues long: Carene synthase 3, chloroplastic (627 aa).

The transit peptide at 1 to 36 directs the protein to the chloroplast; sequence MSVISIVPLASKSCLYKSLMSSTHELKALCRPIATL. Mg(2+) contacts are provided by Asp378, Asp382, and Asp530. The DDXXD motif signature appears at 378–382; the sequence is DDMYD.

This sequence belongs to the terpene synthase family. Tpsd subfamily. It depends on Mg(2+) as a cofactor. Mn(2+) is required as a cofactor.

Its subcellular location is the plastid. The protein localises to the chloroplast. It carries out the reaction (2E)-geranyl diphosphate = (+)-car-3-ene + diphosphate. Its pathway is terpene metabolism; oleoresin biosynthesis. Functionally, terpene synthase (TPS) involved in defensive oleoresin formation in conifers in response to insect attack or other injury. This is Carene synthase 3, chloroplastic (TPS-3car3) from Picea sitchensis (Sitka spruce).